Here is a 180-residue protein sequence, read N- to C-terminus: Large ribosomal subunit protein uL6 (180 aa).

The protein belongs to the universal ribosomal protein uL6 family. As to quaternary structure, part of the 50S ribosomal subunit.

This protein binds to the 23S rRNA, and is important in its secondary structure. It is located near the subunit interface in the base of the L7/L12 stalk, and near the tRNA binding site of the peptidyltransferase center. In Picrophilus torridus (strain ATCC 700027 / DSM 9790 / JCM 10055 / NBRC 100828 / KAW 2/3), this protein is Large ribosomal subunit protein uL6.